A 90-amino-acid chain; its full sequence is Small ribosomal subunit protein uS15 (90 aa).

Belongs to the universal ribosomal protein uS15 family. In terms of assembly, part of the 30S ribosomal subunit. Forms a bridge to the 50S subunit in the 70S ribosome, contacting the 23S rRNA.

One of the primary rRNA binding proteins, it binds directly to 16S rRNA where it helps nucleate assembly of the platform of the 30S subunit by binding and bridging several RNA helices of the 16S rRNA. Its function is as follows. Forms an intersubunit bridge (bridge B4) with the 23S rRNA of the 50S subunit in the ribosome. The polypeptide is Small ribosomal subunit protein uS15 (Blochmanniella floridana).